The chain runs to 363 residues: Phospho-N-acetylmuramoyl-pentapeptide-transferase (363 aa).

The next 10 helical transmembrane spans lie at 33–53 (YAVLMGIALYAGFFFTYGVLP), 82–102 (GVIFVSVFVLLVYLLMRPSFV), 105–125 (LILLLTWGVMLTGYLDDCAQV), 133–153 (GALDFLFAVLTAALLGHFYFH), 166–186 (PVFVSPFLFFAGSVVILWMSI), 198–218 (LSGALVLMALLSMGTIFYFLL), 227–247 (LLVPFVVDGAQWALMSFALAG), 271–291 (ALGFFIGVLVLISGNPFLLLM), 295–315 (VILVNGGTGLLKVVLLRFFHV), and 340–360 (VLLRFMILQGLLTIGLLGVLF).

Belongs to the glycosyltransferase 4 family. MraY subfamily. The cofactor is Mg(2+).

The protein localises to the cell inner membrane. It carries out the reaction UDP-N-acetyl-alpha-D-muramoyl-L-alanyl-gamma-D-glutamyl-meso-2,6-diaminopimeloyl-D-alanyl-D-alanine + di-trans,octa-cis-undecaprenyl phosphate = di-trans,octa-cis-undecaprenyl diphospho-N-acetyl-alpha-D-muramoyl-L-alanyl-D-glutamyl-meso-2,6-diaminopimeloyl-D-alanyl-D-alanine + UMP. Its pathway is cell wall biogenesis; peptidoglycan biosynthesis. Its function is as follows. Catalyzes the initial step of the lipid cycle reactions in the biosynthesis of the cell wall peptidoglycan: transfers peptidoglycan precursor phospho-MurNAc-pentapeptide from UDP-MurNAc-pentapeptide onto the lipid carrier undecaprenyl phosphate, yielding undecaprenyl-pyrophosphoryl-MurNAc-pentapeptide, known as lipid I. The protein is Phospho-N-acetylmuramoyl-pentapeptide-transferase of Treponema pallidum (strain Nichols).